Here is a 72-residue protein sequence, read N- to C-terminus: Translation initiation factor IF-1 (72 aa).

The S1-like domain maps to 1–72 (MSKEDMIEFS…TKGRITFRFK (72 aa)).

The protein belongs to the IF-1 family. In terms of assembly, component of the 30S ribosomal translation pre-initiation complex which assembles on the 30S ribosome in the order IF-2 and IF-3, IF-1 and N-formylmethionyl-tRNA(fMet); mRNA recruitment can occur at any time during PIC assembly.

Its subcellular location is the cytoplasm. In terms of biological role, one of the essential components for the initiation of protein synthesis. Stabilizes the binding of IF-2 and IF-3 on the 30S subunit to which N-formylmethionyl-tRNA(fMet) subsequently binds. Helps modulate mRNA selection, yielding the 30S pre-initiation complex (PIC). Upon addition of the 50S ribosomal subunit IF-1, IF-2 and IF-3 are released leaving the mature 70S translation initiation complex. This chain is Translation initiation factor IF-1, found in Granulibacter bethesdensis (strain ATCC BAA-1260 / CGDNIH1).